The following is a 299-amino-acid chain: Fibrinogen silencer-binding protein (299 aa).

A Glycyl lysine isopeptide (Lys-Gly) (interchain with G-Cter in SUMO2) cross-link involves residue K94.

In terms of assembly, interacts with APBA1 (via PDZ 1 and 2 domains). Expressed in multiple tissues including brain.

The protein resides in the nucleus. Transcriptional repressor that down-regulates the expression of the fibrinogen gamma chain. Represses transcription of GSK3B gene promoter via its interaction with APBA1. This chain is Fibrinogen silencer-binding protein (FSBP), found in Homo sapiens (Human).